Here is a 207-residue protein sequence, read N- to C-terminus: Large ribosomal subunit protein uL4 (207 aa).

A disordered region spans residues 58 to 85 (AGSGKKPFKQKGTGQARQGCRRAPQYPG).

The protein belongs to the universal ribosomal protein uL4 family. Part of the 50S ribosomal subunit.

Functionally, one of the primary rRNA binding proteins, this protein initially binds near the 5'-end of the 23S rRNA. It is important during the early stages of 50S assembly. It makes multiple contacts with different domains of the 23S rRNA in the assembled 50S subunit and ribosome. Forms part of the polypeptide exit tunnel. This chain is Large ribosomal subunit protein uL4, found in Geotalea uraniireducens (strain Rf4) (Geobacter uraniireducens).